We begin with the raw amino-acid sequence, 407 residues long: Protein S-acyltransferase 8 (407 aa).

2 consecutive transmembrane segments (helical) span residues 29–49 (SLPL…VFVA) and 62–82 (GYAI…LLFF). A DHHC domain is found at 136–186 (KYCDTCMLYRPPRCSHCSICNNCVERFDHHCPWVGQCIGLRNYRYFFMFVS). The S-palmitoyl cysteine intermediate role is filled by cysteine 166. The next 2 helical transmembrane spans lie at 181–201 (FFMF…MSAV) and 224–244 (AVVL…LTAF). The segment at 348–368 (AEDANNNQPHHTLDIDHERAG) is disordered. A compositionally biased stretch (basic and acidic residues) spans 358–368 (HTLDIDHERAG). Serine 385 is modified (phosphoserine).

This sequence belongs to the DHHC palmitoyltransferase family. As to expression, expressed in flowers and pollen.

It is found in the cell membrane. The enzyme catalyses L-cysteinyl-[protein] + hexadecanoyl-CoA = S-hexadecanoyl-L-cysteinyl-[protein] + CoA. Its function is as follows. S-acyltransferase involved in protein lipid modification. The sequence is that of Protein S-acyltransferase 8 (PAT08) from Arabidopsis thaliana (Mouse-ear cress).